Reading from the N-terminus, the 242-residue chain is Eukaryotic translation initiation factor 4E type 1B (242 aa).

Residues M1–L42 are disordered. Over residues W16 to A25 the composition is skewed to acidic residues. Positions G32–T41 are enriched in polar residues. The tract at residues H62–Q65 is EIF4EBP1/2/3 binding. An mRNA-binding site is contributed by W81–Q82. The tract at residues W98–S102 is EIF4EBP1/2/3 binding. Position 127–128 (W127–E128) interacts with mRNA. Residues E157–G164 are EIF4EBP1/2/3 binding. MRNA-binding positions include R182–K187 and T230–S232.

This sequence belongs to the eukaryotic initiation factor 4E family. In terms of assembly, eIF4F is a multi-subunit complex, the composition of which varies with external and internal environmental conditions. It is composed of at least EIF4A, EIF4E and EIF4G.

In terms of biological role, recognizes and binds the 7-methylguanosine-containing mRNA cap during an early step in the initiation of protein synthesis and facilitates ribosome binding by inducing the unwinding of the mRNAs secondary structure. This chain is Eukaryotic translation initiation factor 4E type 1B (EIF4E1B), found in Homo sapiens (Human).